The sequence spans 765 residues: MAGFKRGYDGKIAGLYDLDKTLGRGHFAVVKLARHVFTGEKVAVKVIDKTKLDTLATGHLFQEVRCMKLVQHPNIVRLYEVIDTQTKLYLILELGDGGDMFDYIMKHEEGLNEDLAKKYFAQIVHAISYCHKLHVVHRDLKPENVVFFEKQGLVKLTDFGFSNKFQPGKKLTTSCGSLAYSAPEILLGDEYDAPAVDIWSLGVILFMLVCGQPPFQEANDSETLTMIMDCKYTVPSHVSKECKDLITRMLQRDPKRRASLEEIENHPWLQGVDPSPATKYNIPLVSYKNLSEEEHNSIIQRMVLGDIADRDAIVEALETNRYNHITATYFLLAERILREKQEKEIQTRSASPSNIKAQFRQSWPTKIDVPQDLEDDLTATPLSHATVPQSPARAADSVLNGHRSKGLCDSAKKDDLPELAGPALSTVPPASLKPTASGRKCLFRVEEDEEEDEEDKKPMSLSTQVVLRRKPSVTNRLTSRKSAPVLNQIFEEGESDDEFDMDENLPPKLSRLKMNIASPGTVHKRYHRRKSQGRGSSCSSSETSDDDSESRRRLDKDSGFTYSWHRRDSSEGPPGSEGDGGGQSKPSNASGGVDKASPSENNAGGGSPSSGSGGNPTNTSGTTRRCAGPSNSMQLASRSAGELVESLKLMSLCLGSQLHGSTKYIIDPQNGLSFSSVKVQEKSTWKMCISSTGNAGQVPAVGGIKFFSDHMADTTTELERIKSKNLKNNVLQLPLCEKTISVNIQRNPKEGLLCASSPASCCHVI.

Residues 16–269 (YDLDKTLGRG…LEEIENHPWL (254 aa)) form the Protein kinase domain. ATP is bound by residues 22-30 (LGRGHFAVV) and lysine 45. Aspartate 139 acts as the Proton acceptor in catalysis. Serine 162 carries the post-translational modification Phosphoserine. Residue threonine 173 is modified to Phosphothreonine; by LKB1. The region spanning 291–334 (SEEEHNSIIQRMVLGDIADRDAIVEALETNRYNHITATYFLLAE) is the UBA domain. Phosphoserine occurs at positions 362, 390, 482, 495, and 518. Residues 512–634 (LKMNIASPGT…RCAGPSNSMQ (123 aa)) form a disordered region. Residues 522–532 (VHKRYHRRKSQ) show a composition bias toward basic residues. Over residues 533–542 (GRGSSCSSSE) the composition is skewed to low complexity. Arginine 534 carries the post-translational modification Omega-N-methylarginine. Residues 549-558 (ESRRRLDKDS) are compositionally biased toward basic and acidic residues. Residues 603-614 (AGGGSPSSGSGG) show a composition bias toward gly residues. Serine 607 carries the phosphoserine modification.

Belongs to the protein kinase superfamily. CAMK Ser/Thr protein kinase family. Mg(2+) is required as a cofactor. In terms of processing, autophosphorylated. Phosphorylation on Thr-173 by STK11/LKB1 in complex with STE20-related adapter-alpha (STRADA) pseudo kinase and CAB39. Expressed in hematopoietic progenitor cells and leukemic cell lines. Weakly expressed in the testis.

It localises to the nucleus. The enzyme catalyses L-seryl-[protein] + ATP = O-phospho-L-seryl-[protein] + ADP + H(+). It carries out the reaction L-threonyl-[protein] + ATP = O-phospho-L-threonyl-[protein] + ADP + H(+). Activated by phosphorylation on Thr-173. Functionally, may play a role in hematopoietic cell proliferation or differentiation. Potential mediator of neuronal apoptosis. This chain is SNF-related serine/threonine-protein kinase, found in Homo sapiens (Human).